We begin with the raw amino-acid sequence, 91 residues long: uncharacterized protein (91 aa).

This is an uncharacterized protein from Archaeoglobus fulgidus (strain ATCC 49558 / DSM 4304 / JCM 9628 / NBRC 100126 / VC-16).